The sequence spans 377 residues: NAC domain-containing protein 76 (377 aa).

In terms of domain architecture, NAC spans 10–159; it reads VPPGFRFHPT…GWVVCRAFKK (150 aa). Residues 110 to 165 mediate DNA binding; that stretch reads IGMRKTLVFYKGRAPNGQKTDWIMHEYRLESDENAPPQEEGWVVCRAFKKKPMTGQ. The segment at 312 to 347 is disordered; sequence GVSGFGGHHEEDNNKIGHYNNEESNNKGSVETASST. The segment covering 318–336 has biased composition (basic and acidic residues); the sequence is GHHEEDNNKIGHYNNEESN. The segment covering 337 to 347 has biased composition (polar residues); sequence NKGSVETASST.

Belongs to the plant vascular related NAC-domain protein family. Interacts with NAC030/VND7. Detected in root protoxylem and metaxylem poles and in vessels of protoxylems, outermost metaxylems, inner metaxylems, shoots and hypocotyls. Expressed in roots, hypocotyls, cotyledons and leaves. Present in developing xylems. Specifically expressed in vessels but not in interfascicular fibers in stems.

It is found in the nucleus. Its function is as follows. Transcription activator that binds to the secondary wall NAC binding element (SNBE), 5'-(T/A)NN(C/T)(T/C/G)TNNNNNNNA(A/C)GN(A/C/T)(A/T)-3', in the promoter of target genes. Involved in xylem formation by promoting the expression of secondary wall-associated transcription factors and of genes involved in secondary wall biosynthesis and programmed cell death, genes driven by the secondary wall NAC binding element (SNBE). Triggers thickening of secondary walls. This chain is NAC domain-containing protein 76, found in Arabidopsis thaliana (Mouse-ear cress).